The primary structure comprises 142 residues: Hemoglobin subunit alpha-A (142 aa).

The region spanning 2–142 (VLSANDKTNV…VGNVLTAKYR (141 aa)) is the Globin domain. Histidine 59 lines the O2 pocket. Histidine 88 contributes to the heme b binding site.

Belongs to the globin family. As to quaternary structure, heterotetramer of two alpha chains and two beta chains. Red blood cells.

Its function is as follows. Involved in oxygen transport from the lung to the various peripheral tissues. The protein is Hemoglobin subunit alpha-A (HBAA) of Aegypius monachus (Cinereous vulture).